The following is a 653-amino-acid chain: DNA-directed RNA polymerase III subunit rpc3 (653 aa).

Disordered stretches follow at residues proline 131–serine 181, proline 266–alanine 285, aspartate 293–aspartate 312, and valine 412–asparagine 444. The segment covering arginine 138–glycine 169 has biased composition (basic and acidic residues). The span at aspartate 293 to glutamate 311 shows a compositional bias: acidic residues. The interval threonine 580–phenylalanine 601 is leucine-zipper.

It belongs to the RNA polymerase beta chain family. In terms of assembly, component of the RNA polymerase III (Pol III) complex consisting of 17 subunits.

The protein resides in the nucleus. Its function is as follows. DNA-dependent RNA polymerase catalyzes the transcription of DNA into RNA using the four ribonucleoside triphosphates as substrates. Specific core component of RNA polymerase III which synthesizes small RNAs, such as 5S rRNA and tRNAs. The chain is DNA-directed RNA polymerase III subunit rpc3 (rpc82) from Aspergillus oryzae (strain ATCC 42149 / RIB 40) (Yellow koji mold).